The sequence spans 930 residues: Polypeptide N-acetylgalactosaminyltransferase 5 (930 aa).

The Cytoplasmic portion of the chain corresponds to 1 to 12 (MNKIRKFFRGSG). The chain crosses the membrane as a helical; Signal-anchor for type II membrane protein span at residues 13 to 35 (RVLAFIFAASVIWLLFDMAALRL). Topologically, residues 36 to 930 (SFSEINAGLL…KWKFEKYYEV (895 aa)) are lumenal. Residues 190–209 (KQEAPQNYNVSSDTSKQASE) are disordered. Residues 193–209 (APQNYNVSSDTSKQASE) are compositionally biased toward polar residues. Asparagine 198, asparagine 213, and asparagine 283 each carry an N-linked (GlcNAc...) asparagine glycan. The residue at position 285 (serine 285) is a Phosphoserine. 4 N-linked (GlcNAc...) asparagine glycosylation sites follow: asparagine 287, asparagine 309, asparagine 355, and asparagine 387. Residues 327-381 (DTKEVPNSKTQTVFPKLLGGSPHKQIPRNQSKTSSSPPALKKAVSQSKPTISGGL) are disordered. Polar residues predominate over residues 353–363 (PRNQSKTSSSP). 3 cysteine pairs are disulfide-bonded: cysteine 476–cysteine 708, cysteine 699–cysteine 779, and cysteine 812–cysteine 825. The tract at residues 485–594 (LPTTSIIMCF…VGWLEPLLER (110 aa)) is catalytic subdomain A. Residues aspartate 526 and arginine 555 each coordinate substrate. A glycan (N-linked (GlcNAc...) asparagine) is linked at asparagine 568. Aspartate 578 is a Mn(2+) binding site. Residue serine 579 participates in substrate binding. Histidine 580 provides a ligand contact to Mn(2+). The tract at residues 654–716 (IIRCPVMAGG…PCSRVGHIFR (63 aa)) is catalytic subdomain B. Tryptophan 685 contributes to the substrate binding site. Histidine 713 is a binding site for Mn(2+). Positions 716 and 721 each coordinate substrate. N-linked (GlcNAc...) asparagine glycosylation is found at asparagine 766, asparagine 817, and asparagine 835. One can recognise a Ricin B-type lectin domain in the interval 794-925 (KAPVVRASGV…MELQQKWKFE (132 aa)). Intrachain disulfides connect cysteine 848–cysteine 863 and cysteine 898–cysteine 913. A glycan (N-linked (GlcNAc...) asparagine) is linked at asparagine 902.

This sequence belongs to the glycosyltransferase 2 family. GalNAc-T subfamily. Interacts with EXT2. Does not interact with EXT1, EXTL1 or EXTL3. Mn(2+) is required as a cofactor. In terms of tissue distribution, expressed at low level. Not expressed before E7.5 during embryogenesis. Expressed in dental mesenchyme and tongue. Accumulates in a subset of mesenchymal cells at the ventral-most portions of the 12.5 dpc maxilla and mandible underlying the dental lamina.

It localises to the golgi apparatus membrane. It catalyses the reaction L-seryl-[protein] + UDP-N-acetyl-alpha-D-galactosamine = a 3-O-[N-acetyl-alpha-D-galactosaminyl]-L-seryl-[protein] + UDP + H(+). The enzyme catalyses L-threonyl-[protein] + UDP-N-acetyl-alpha-D-galactosamine = a 3-O-[N-acetyl-alpha-D-galactosaminyl]-L-threonyl-[protein] + UDP + H(+). It functions in the pathway protein modification; protein glycosylation. Catalyzes the initial reaction in O-linked oligosaccharide biosynthesis, the transfer of an N-acetyl-D-galactosamine residue to a serine or threonine residue on the protein receptor. Has activity toward EA2 peptide substrate, but has a weak activity toward Muc2 or Muc1b substrates. In Mus musculus (Mouse), this protein is Polypeptide N-acetylgalactosaminyltransferase 5 (Galnt5).